Here is a 245-residue protein sequence, read N- to C-terminus: MIIVSRAIVLHNTAYNDSYSIAHLFSRESGRVSYLIPRSSKRGKSGGSLRLLISPLNELEITAEHKQHRDLHFIKEAKLCSLHGRIQSDPVRNSIALFLAEFLYLILRLPEADTNLYDFVAFSIDKLEEMDGPMANFHLAFLFRLLVPLGLIPDLQFGGSVIPRWFDPADGRFVPNAPAHGRGIPPHQSTYLQLFRRITFDNMKAFRLSRAERRQVLDYLVDYYRFHLPPFPLLKTPDILSTLFD.

The protein belongs to the RecO family.

Its function is as follows. Involved in DNA repair and RecF pathway recombination. This Porphyromonas gingivalis (strain ATCC 33277 / DSM 20709 / CIP 103683 / JCM 12257 / NCTC 11834 / 2561) protein is DNA repair protein RecO.